The sequence spans 514 residues: Cholesterol side-chain cleavage enzyme, mitochondrial (514 aa).

A mitochondrion-targeting transit peptide spans 1–39 (SFRLSLSASTYAQRGSFTTPEHDFTLFPHRNHSVTSESR). Heme is bound at residue Cys461.

It belongs to the cytochrome P450 family. Heme serves as cofactor.

The protein localises to the mitochondrion inner membrane. It catalyses the reaction 6 reduced [adrenodoxin] + cholesterol + 3 O2 + 6 H(+) = 4-methylpentanal + pregnenolone + 6 oxidized [adrenodoxin] + 4 H2O. It functions in the pathway lipid metabolism; C21-steroid hormone metabolism. Its function is as follows. Catalyzes the side-chain cleavage reaction of cholesterol to pregnenolone, the precursor of most steroid hormones. The polypeptide is Cholesterol side-chain cleavage enzyme, mitochondrial (CYP11A1) (Hypanus americanus (Southern stingray)).